Consider the following 279-residue polypeptide: Protease HtpX homolog (279 aa).

2 helical membrane passes run 4 to 24 and 34 to 54; these read IFLF…VLAV and GSLL…SLLM. Position 140 (H140) interacts with Zn(2+). The active site involves E141. Position 144 (H144) interacts with Zn(2+). 2 consecutive transmembrane segments (helical) span residues 155–175 and 189–209; these read LIQG…ANLI and FLVS…IVMW. E215 provides a ligand contact to Zn(2+).

It belongs to the peptidase M48B family. Requires Zn(2+) as cofactor.

It is found in the cell inner membrane. In Neisseria gonorrhoeae (strain ATCC 700825 / FA 1090), this protein is Protease HtpX homolog.